Here is a 429-residue protein sequence, read N- to C-terminus: MKRAIIVGGGLAGGLTAIYLAKRGYEVHVVEKRGDPLRDLSSYVDVVSSRAIGVSMTVRGIKSVLAAGIPRAELDACGEPIVAMAFSVGGQYRMRELKPLEDFRPLSLNRAAFQKLLNKYANLAGVRYYFEHKCLDVDLDGKSVLIQGKDGQPQRLQGDMIIGADGAHSAVRQAMQSGLRRFEFQQTFFRHGYKTLVLPDAQALGYRKDTLYFFGMDSGGLFAGRAATIPDGSVSIAVCLPYSGSPSLTTTDEPTMRAFFDRYFGGLPRDARDEMLRQFLAKPSNDLINVRSSTFHYKGNVLLLGDAAHATAPFLGQGMNMALEDARTFVELLDRHQGDQDKAFPEFTELRKVQADAMQDMARANYDVLSCSNPIFFMRARYTRYMHSKFPGLYPPDMAEKLYFTSEPYDRLQQIQRKQNVWYKIGRVN.

FAD is bound at residue 3-21 (RAIIVGGGLAGGLTAIYLA).

FAD serves as cofactor.

The enzyme catalyses protoviolaceinate + NADPH + O2 + H(+) = violaceinate + NADP(+) + H2O. It catalyses the reaction protoviolaceinate + NADH + O2 + H(+) = violaceinate + NAD(+) + H2O. It carries out the reaction protodeoxyviolaceinate + NADPH + O2 + H(+) = deoxyviolaceinate + NADP(+) + H2O. The catalysed reaction is protodeoxyviolaceinate + NADH + O2 + H(+) = deoxyviolaceinate + NAD(+) + H2O. Its pathway is pigment biosynthesis; violacein biosynthesis. In terms of biological role, catalyzes the hydroxylation of the 16-position of protoviolaceinate and protodeoxyviolaceinate to form violacein and deoxyviolacein, respectively. The sequence is that of Violacein synthase (vioC) from Chromobacterium violaceum (strain ATCC 12472 / DSM 30191 / JCM 1249 / CCUG 213 / NBRC 12614 / NCIMB 9131 / NCTC 9757 / MK).